Reading from the N-terminus, the 354-residue chain is L-lactate dehydrogenase (354 aa).

NAD(+) is bound by residues 73–78 (DAVPDK) and arginine 120. Positions 127, 159, and 190 each coordinate substrate. Residue asparagine 159 coordinates NAD(+). Residue histidine 214 is the Proton acceptor of the active site. Residue threonine 269 participates in substrate binding. The disordered stretch occupies residues 302-332 (HGIPDGTTSSSACPPRRPRRRPGRREMELTE).

It belongs to the LDH/MDH superfamily. LDH family. Homotetramer.

It carries out the reaction (S)-lactate + NAD(+) = pyruvate + NADH + H(+). It functions in the pathway fermentation; pyruvate fermentation to lactate; (S)-lactate from pyruvate: step 1/1. The chain is L-lactate dehydrogenase from Zea mays (Maize).